The following is a 1452-amino-acid chain: Receptor-type tyrosine-protein phosphatase mu (1452 aa).

An N-terminal signal peptide occupies residues 1–20 (MRTLGTCLVTLAGLLLTAAG). At 21 to 742 (ETFSGGCLFD…PEKQTDHTVK (722 aa)) the chain is on the extracellular side. Residues 22 to 184 (TFSGGCLFDE…VKVLGHPCTR (163 aa)) enclose the MAM domain. Cysteine 27 and cysteine 36 are joined by a disulfide. N-linked (GlcNAc...) asparagine glycans are attached at residues asparagine 72, asparagine 92, asparagine 131, and asparagine 249. Cystine bridges form between cysteine 96–cysteine 182 and cysteine 206–cysteine 260. The Ig-like C2-type domain occupies 186-277 (PHFLRIQNVE…VGISNYAELV (92 aa)). 4 Fibronectin type-III domains span residues 284–379 (PIAP…CADP), 382–480 (GPRK…TDED), 481–587 (LPGA…SAPS), and 589–671 (PAYE…DSLQ). 8 N-linked (GlcNAc...) asparagine glycosylation sites follow: asparagine 406, asparagine 414, asparagine 454, asparagine 534, asparagine 544, asparagine 598, asparagine 651, and asparagine 681. A helical transmembrane segment spans residues 743–764 (IAGVIAGILLFVIIFLGVVLVM). Over 765–1452 (KKRKLAKKRK…EVALEYLNSG (688 aa)) the chain is Cytoplasmic. Serine 821 is modified (phosphoserine). Tyrosine-protein phosphatase domains follow at residues 900–1154 (FKEE…ILEA) and 1186–1448 (IKEE…ALEY). Substrate is bound by residues aspartate 1063, 1095-1101 (CSAGAGR), and glutamine 1139. Catalysis depends on cysteine 1095, which acts as the Phosphocysteine intermediate. Residue cysteine 1389 is the Phosphocysteine intermediate of the active site.

Belongs to the protein-tyrosine phosphatase family. Receptor class 2B subfamily. As to quaternary structure, homodimer. As to expression, most abundant in lung, less in brain and heart.

The protein localises to the cell membrane. The catalysed reaction is O-phospho-L-tyrosyl-[protein] + H2O = L-tyrosyl-[protein] + phosphate. Its function is as follows. Receptor protein-tyrosine phosphatase that mediates homotypic cell-cell interactions and plays a role in adipogenic differentiation via modulation of p120 catenin/CTNND1 phosphorylation. Promotes CTNND1 dephosphorylation and prevents its cytoplasmic localization where it inhibits SLC2A4 membrane trafficking. In turn, SLC2A4 is directed to the plasma membrane and performs its glucose transporter function. The protein is Receptor-type tyrosine-protein phosphatase mu (Ptprm) of Mus musculus (Mouse).